Here is a 289-residue protein sequence, read N- to C-terminus: Protease HtpX (289 aa).

The next 2 membrane-spanning stretches (helical) occupy residues 4 to 24 and 36 to 56; these read IMLFLATNLAVVLVLSVVLNI and LSGLLVMAAVFGFGGAFISLM. H143 is a Zn(2+) binding site. Residue E144 is part of the active site. H147 lines the Zn(2+) pocket. Transmembrane regions (helical) follow at residues 158 to 178 and 192 to 212; these read LMQGVVNTFVIFLSRFIANIV and MVYFGVSMVLELVFGFLASFL. E221 is a Zn(2+) binding site.

Belongs to the peptidase M48B family. It depends on Zn(2+) as a cofactor.

The protein localises to the cell inner membrane. The sequence is that of Protease HtpX from Vibrio campbellii (strain ATCC BAA-1116).